The following is a 56-amino-acid chain: Large ribosomal subunit protein bL32 (56 aa).

The protein belongs to the bacterial ribosomal protein bL32 family.

This Brevibacillus brevis (strain 47 / JCM 6285 / NBRC 100599) protein is Large ribosomal subunit protein bL32.